The sequence spans 360 residues: Photosystem II protein D1 3 (360 aa).

The next 3 helical transmembrane spans lie at 29 to 46 (YVGWFGVLMIPTLLAATV), 118 to 133 (HFLIGCACYLGRQWEL), and 142 to 156 (WICVAYSAPLASATA). H118 contributes to the chlorophyll a binding site. Y126 contacts pheophytin a. Residues D170 and E189 each contribute to the [CaMn4O5] cluster site. A helical membrane pass occupies residues 197-218 (FHMLGVAGVFGGSLFSAMHGSL). A chlorophyll a-binding site is contributed by H198. Residues H215 and 264-265 (SF) each bind a quinone. A Fe cation-binding site is contributed by H215. Residue H272 coordinates Fe cation. A helical transmembrane segment spans residues 274 to 288 (FLAAWPVIGIWFTAL). The [CaMn4O5] cluster site is built by H332, E333, D342, and A344. Residues 345-360 (AGEVAPVALTAPAING) constitute a propeptide that is removed on maturation.

The protein belongs to the reaction center PufL/M/PsbA/D family. As to quaternary structure, PSII is composed of 1 copy each of membrane proteins PsbA, PsbB, PsbC, PsbD, PsbE, PsbF, PsbH, PsbI, PsbJ, PsbK, PsbL, PsbM, PsbT, PsbX, PsbY, PsbZ, Psb30/Ycf12, peripheral proteins PsbO, CyanoQ (PsbQ), PsbU, PsbV and a large number of cofactors. It forms dimeric complexes. Requires The D1/D2 heterodimer binds P680, chlorophylls that are the primary electron donor of PSII, and subsequent electron acceptors. It shares a non-heme iron and each subunit binds pheophytin, quinone, additional chlorophylls, carotenoids and lipids. D1 provides most of the ligands for the Mn4-Ca-O5 cluster of the oxygen-evolving complex (OEC). There is also a Cl(-1) ion associated with D1 and D2, which is required for oxygen evolution. The PSII complex binds additional chlorophylls, carotenoids and specific lipids. as cofactor. In terms of processing, tyr-161 forms a radical intermediate that is referred to as redox-active TyrZ, YZ or Y-Z. Post-translationally, C-terminally processed by CtpA; processing is essential to allow assembly of the oxygen-evolving complex and thus photosynthetic growth.

It is found in the cellular thylakoid membrane. It catalyses the reaction 2 a plastoquinone + 4 hnu + 2 H2O = 2 a plastoquinol + O2. Functionally, photosystem II (PSII) is a light-driven water:plastoquinone oxidoreductase that uses light energy to abstract electrons from H(2)O, generating O(2) and a proton gradient subsequently used for ATP formation. It consists of a core antenna complex that captures photons, and an electron transfer chain that converts photonic excitation into a charge separation. The D1/D2 (PsbA/PsbD) reaction center heterodimer binds P680, the primary electron donor of PSII as well as several subsequent electron acceptors. The protein is Photosystem II protein D1 3 of Trichormus variabilis (strain ATCC 29413 / PCC 7937) (Anabaena variabilis).